The following is a 329-amino-acid chain: Catabolite control protein A (329 aa).

One can recognise an HTH lacI-type domain in the interval 1–57 (MTVTIYDVAREARVSMATVSRVVNGNQNVKAETKNKVNEVIKRLNYRPNAVARGLAS). Residues 5–24 (IYDVAREARVSMATVSRVVN) constitute a DNA-binding region (H-T-H motif).

Global transcriptional regulator of carbon catabolite repression (CCR) and carbon catabolite activation (CCA), which ensures optimal energy usage under diverse conditions. This chain is Catabolite control protein A (ccpA), found in Staphylococcus aureus (strain MRSA252).